The sequence spans 480 residues: UDP-N-acetylmuramate--L-alanine ligase (480 aa).

Position 122-128 (122-128 (GTHGKTT)) interacts with ATP.

Belongs to the MurCDEF family.

The protein localises to the cytoplasm. The enzyme catalyses UDP-N-acetyl-alpha-D-muramate + L-alanine + ATP = UDP-N-acetyl-alpha-D-muramoyl-L-alanine + ADP + phosphate + H(+). It participates in cell wall biogenesis; peptidoglycan biosynthesis. Its function is as follows. Cell wall formation. The sequence is that of UDP-N-acetylmuramate--L-alanine ligase from Pseudomonas aeruginosa (strain LESB58).